The primary structure comprises 490 residues: UDP-N-acetylmuramate--L-alanine ligase (490 aa).

126–132 is a binding site for ATP; that stretch reads GTHGKTT.

This sequence belongs to the MurCDEF family.

It localises to the cytoplasm. The enzyme catalyses UDP-N-acetyl-alpha-D-muramate + L-alanine + ATP = UDP-N-acetyl-alpha-D-muramoyl-L-alanine + ADP + phosphate + H(+). Its pathway is cell wall biogenesis; peptidoglycan biosynthesis. In terms of biological role, cell wall formation. This chain is UDP-N-acetylmuramate--L-alanine ligase, found in Sodalis glossinidius (strain morsitans).